The following is a 313-amino-acid chain: NADH-ubiquinone oxidoreductase chain 1 (313 aa).

The next 8 membrane-spanning stretches (helical) occupy residues 2-22 (ILNFIYYFILILMVLLSIAFF), 71-91 (FIQIISPLIMILMMMMMWMIF), 103-123 (SIIFFLCISSLASYAILFSGW), 138-158 (FAQVISYEVSMAMILISLAII), 173-193 (TFPLIFSFLPIFIIWIITVLA), 220-240 (WLFAIIFMSEYGDIMMISFLT), 243-263 (LFLGLKNLILFFVLILMTMII), and 289-309 (SIIFLFLSYFIFLNINNFICI).

This sequence belongs to the complex I subunit 1 family.

The protein resides in the mitochondrion inner membrane. It catalyses the reaction a ubiquinone + NADH + 5 H(+)(in) = a ubiquinol + NAD(+) + 4 H(+)(out). Its function is as follows. Core subunit of the mitochondrial membrane respiratory chain NADH dehydrogenase (Complex I) that is believed to belong to the minimal assembly required for catalysis. Complex I functions in the transfer of electrons from NADH to the respiratory chain. The immediate electron acceptor for the enzyme is believed to be ubiquinone. The polypeptide is NADH-ubiquinone oxidoreductase chain 1 (ND1) (Rhipicephalus sanguineus (Brown dog tick)).